The chain runs to 415 residues: tRNA(Met) cytidine acetate ligase (415 aa).

ATP is bound by residues 7-20 (VVEY…HLYH), Gly-101, Asn-162, and 187-188 (RI).

This sequence belongs to the TmcAL family. Homodimer.

Its subcellular location is the cytoplasm. It carries out the reaction cytidine(34) in elongator tRNA(Met) + acetate + ATP = N(4)-acetylcytidine(34) in elongator tRNA(Met) + AMP + diphosphate. Catalyzes the formation of N(4)-acetylcytidine (ac(4)C) at the wobble position of elongator tRNA(Met), using acetate and ATP as substrates. First activates an acetate ion to form acetyladenylate (Ac-AMP) and then transfers the acetyl group to tRNA to form ac(4)C34. In Bacillus subtilis (strain 168), this protein is tRNA(Met) cytidine acetate ligase.